Consider the following 272-residue polypeptide: Small ribosomal subunit protein uS2 (272 aa).

Residues alanine 238 to lysine 272 are disordered. The segment covering lysine 255–lysine 272 has biased composition (basic and acidic residues).

It belongs to the universal ribosomal protein uS2 family.

This chain is Small ribosomal subunit protein uS2, found in Protochlamydia amoebophila (strain UWE25).